We begin with the raw amino-acid sequence, 373 residues long: LIM domain-binding protein 2 (373 aa).

Disordered stretches follow at residues 244-287 (APPA…KTPA) and 327-373 (QYDA…QASQ). Residues 263–280 (STSSTSNSSAGNTTNSAG) are compositionally biased toward low complexity. An LIM interaction domain (LID) domain is found at 298 to 337 (DVMVVGEPTLMGGEFGDEDERLITRLENTQYDAANGMDDE). Polar residues predominate over residues 341-373 (NNSPALGNNSPWNSKPPATQETKSENAPPQASQ).

This sequence belongs to the LDB family. In terms of assembly, interacts with LHX9. Interacts with SLK; leading to negatively regulate SLK kinase activity. Interacts with LMO4. Interacts with PITX1. Interacts with LHX3. In terms of processing, ubiquitinated by RLIM/RNF12, leading to its degradation by the proteasome. Expressed in multiple tissues including heart, brain, liver, kidney, testis, lung and muscle, with expression highest in the brain, trigeminal ganglia, and lung.

The protein localises to the nucleus. Functionally, transcription cofactor. Binds to the LIM domain of a wide variety of LIM domain-containing transcription factors. Its function is as follows. Regulates the transcriptional activity of LIM-containing proteins such as LHX3 or PITX1. This is LIM domain-binding protein 2 (Ldb2) from Mus musculus (Mouse).